The primary structure comprises 352 residues: Phosphoribosylformylglycinamidine cyclo-ligase (352 aa).

Belongs to the AIR synthase family.

It is found in the cytoplasm. The catalysed reaction is 2-formamido-N(1)-(5-O-phospho-beta-D-ribosyl)acetamidine + ATP = 5-amino-1-(5-phospho-beta-D-ribosyl)imidazole + ADP + phosphate + H(+). It participates in purine metabolism; IMP biosynthesis via de novo pathway; 5-amino-1-(5-phospho-D-ribosyl)imidazole from N(2)-formyl-N(1)-(5-phospho-D-ribosyl)glycinamide: step 2/2. The sequence is that of Phosphoribosylformylglycinamidine cyclo-ligase from Pseudomonas putida (strain W619).